The primary structure comprises 150 residues: Clitocypin (150 aa).

It belongs to the protease inhibitor I48 family. In terms of assembly, homodimer. In terms of tissue distribution, uniformly expressed throughout the mature fruiting body (at mRNA and protein level).

Binds and inhibits cysteine proteinases. Inhibits most strongly papain and cathepsin L, more weakly bromelain and cathepsin B while it is completely ineffective against cathepsin H. The polypeptide is Clitocypin (Cnc1) (Clitocybe nebularis (Clouded agaric)).